The sequence spans 103 residues: Histone H4 (103 aa).

The segment covering 1-14 (MTGRGKGGKGLGKG) has biased composition (gly residues). Residues 1–20 (MTGRGKGGKGLGKGGAKRHR) are disordered. N6-acetyl-N6-methyllysine; alternate occurs at positions 6 and 13. Residues 17-21 (KRHRK) mediate DNA binding.

The protein belongs to the histone H4 family. The nucleosome is a histone octamer containing two molecules each of H2A, H2B, H3 and H4 assembled in one H3-H4 heterotetramer and two H2A-H2B heterodimers. The octamer wraps approximately 147 bp of DNA.

The protein resides in the nucleus. It is found in the chromosome. Functionally, core component of nucleosome. Nucleosomes wrap and compact DNA into chromatin, limiting DNA accessibility to the cellular machineries which require DNA as a template. Histones thereby play a central role in transcription regulation, DNA repair, DNA replication and chromosomal stability. DNA accessibility is regulated via a complex set of post-translational modifications of histones, also called histone code, and nucleosome remodeling. This chain is Histone H4, found in Diadromus pulchellus (Parasitic wasp).